We begin with the raw amino-acid sequence, 396 residues long: MQNKLLFTSESVTEGHPDKICDQISDAVLDALLEQDPMSRVACETAITTGLVLVMGEITTSGYVDIQKIVRDTVKEIGYDRAKYGFDADTCGVIVALDEQSKDIALGVDKALEAKQNEMTDEAIEAIGAGDQGMMFGYASNETEELMPYPISLAHKLTKQLSKVRKDGTLSYLRPDGKSQVTVEYNEEGKPVHLNAVVLSTQHDPDVTQEQIHEDIKKYVFEPVLPKEMVDEKTKFFINPTGRFVIGGPNGDSGLTGRKIIVDTYGGYARHGGGAFSGKDCTKVDRSASYAARYVAKNIVASGLADKCEIQLSYAIGVAQPTSIMIDTFGTGKKSNEELTEIVRKHFDLRPAGIIKMLDLRRPIYKQTAAYGHFGRNDLNLPWEQTDKAEELKKYL.

His-16 contacts ATP. Asp-18 is a Mg(2+) binding site. Glu-44 provides a ligand contact to K(+). Glu-57 and Gln-100 together coordinate L-methionine. The flexible loop stretch occupies residues 100-110 (QSKDIALGVDK). Residues 176–178 (DGK), 243–244 (RF), Asp-252, 258–259 (RK), Ala-275, and Lys-279 each bind ATP. L-methionine is bound at residue Asp-252. Lys-283 serves as a coordination point for L-methionine.

It belongs to the AdoMet synthase family. Homotetramer; dimer of dimers. Requires Mg(2+) as cofactor. K(+) is required as a cofactor.

Its subcellular location is the cytoplasm. It catalyses the reaction L-methionine + ATP + H2O = S-adenosyl-L-methionine + phosphate + diphosphate. It functions in the pathway amino-acid biosynthesis; S-adenosyl-L-methionine biosynthesis; S-adenosyl-L-methionine from L-methionine: step 1/1. Catalyzes the formation of S-adenosylmethionine (AdoMet) from methionine and ATP. The overall synthetic reaction is composed of two sequential steps, AdoMet formation and the subsequent tripolyphosphate hydrolysis which occurs prior to release of AdoMet from the enzyme. This is S-adenosylmethionine synthase from Lachnoclostridium phytofermentans (strain ATCC 700394 / DSM 18823 / ISDg) (Clostridium phytofermentans).